The chain runs to 344 residues: DNA-directed RNA polymerase subunit alpha (344 aa).

The segment at 1-232 (MGQYTINLRE…HLFLPPFGLE (232 aa)) is alpha N-terminal domain (alpha-NTD). The interval 270-344 (LIKDQFLEYS…KRFGINLKLK (75 aa)) is alpha C-terminal domain (alpha-CTD).

The protein belongs to the RNA polymerase alpha chain family. As to quaternary structure, in plastids the minimal PEP RNA polymerase catalytic core is composed of four subunits: alpha, beta, beta', and beta''. When a (nuclear-encoded) sigma factor is associated with the core the holoenzyme is formed, which can initiate transcription.

The protein resides in the plastid. It is found in the chloroplast. It carries out the reaction RNA(n) + a ribonucleoside 5'-triphosphate = RNA(n+1) + diphosphate. Functionally, DNA-dependent RNA polymerase catalyzes the transcription of DNA into RNA using the four ribonucleoside triphosphates as substrates. In Spirogyra maxima (Green alga), this protein is DNA-directed RNA polymerase subunit alpha.